The sequence spans 63 residues: Glutamine synthetase translation inhibitor (63 aa).

Inhibits the synthesis of glutamine synthetase II. The polypeptide is Glutamine synthetase translation inhibitor (gstI) (Rhizobium leguminosarum).